A 3680-amino-acid chain; its full sequence is Dystrophin (3680 aa).

Residues 1–237 (MLWWEEVEDC…ILMYITSLFQ (237 aa)) form an actin-binding region. Calponin-homology (CH) domains follow at residues 15–119 (DVQK…LHWQ) and 134–240 (TNSE…QVLP). Positions 63–72 (PKEKGSTRVH) are ANK2- and ANK-3 binding. Residues 310–323 (TSDPTRSPLPSQHL) show a composition bias toward polar residues. Residues 310–332 (TSDPTRSPLPSQHLETPEDKSFG) are disordered. Spectrin repeat units follow at residues 340 to 448 (ANLD…NLHK), 449 to 557 (VLMD…LLQD), 560 to 668 (LKWQ…QISQ), 720 to 829 (EIRK…WLEY), 831 to 935 (NNII…ELQT), 944 to 1047 (RYQE…KLEE), 1050 to 1156 (AKLR…ALKG), 1159 to 1265 (DKTV…TLEE), 1268 to 1369 (ACWH…LLEQ), 1370 to 1465 (SIQS…LFQK), 1470 to 1570 (EQRL…QLEK), 1573 to 1678 (KLSR…LLLE), 1681 to 1780 (KHME…KASI), 1781 to 1876 (PLKE…KALE), 1879 to 1981 (HQWY…TVHE), 1994 to 2103 (EISY…RFDR), 2106 to 2210 (EKWR…RLEE), 2213 to 2320 (NILS…EIEA), 2321 to 2418 (HVKD…LRAK), 2470 to 2572 (FNRA…QLTE), 2575 to 2681 (KDST…ALEE), 2684 to 2797 (RLLQ…HLEA), 2803 to 2925 (KRLH…RKID), and 2930 to 3035 (RLQE…QLHE). The tract at residues 1418 to 1915 (DLTSHEISLE…PEPRDERKIK (498 aa)) is interaction with SYNM. Positions 3050 to 3083 (TSVQGPWERAISPNKVPYYINHETQTTCWDHPKM) constitute a WW domain. The tract at residues 3053 to 3403 (QGPWERAISP…TVLEGDNMET (351 aa)) is interaction with SYNM. The segment at 3303–3359 (KHQAKCNICKECPIIGFRYRSLKHFNYDICQSCFFSGRVAKGHKMHYPMVEYCTPTT) adopts a ZZ-type; degenerate zinc-finger fold. Positions 3308, 3311, 3332, and 3335 each coordinate Zn(2+). The interval 3461–3513 (DDEHLLIQHYWRSLNQESPLSQPRSPAQILISLESEERGELERILADLEGRNR) is binds to SNTB1. Phosphoserine is present on residues serine 3478, serine 3485, and serine 3495. Disordered stretches follow at residues 3524 to 3549 (QQHE…QSPR) and 3595 to 3680 (PQAE…EDTM). Polar residues-rich tracts occupy residues 3602–3621 (NGTT…SSQP) and 3658–3668 (LNHSFPSSRGR). 6 positions are modified to phosphoserine: serine 3607, serine 3608, serine 3612, serine 3618, serine 3619, and serine 3661.

Interacts with SYNM. Interacts with the syntrophins SNTG1 and SNTG2. Interacts with KRT19. Component of the dystrophin-associated glycoprotein complex which is composed of three subcomplexes: a cytoplasmic complex comprised of DMD (or UTRN), DTNA and a number of syntrophins, such as SNTB1, SNTB2, SNTG1 and SNTG2, the transmembrane dystroglycan complex, and the sarcoglycan-sarcospan complex. Interacts with DAG1 (betaDAG1) with DMD; the interaction is inhibited by phosphorylation on the PPXY motif of DAG1. Interacts with SYNM; SNTA1 and SNTB1. Interacts with CMYA5. Directly interacts with ANK2 and ANK3; these interactions do not interfere with betaDAG1-binding and are necessary for proper localization in muscle cells. Identified in a dystroglycan complex that contains at least PRX, DRP2, UTRN, DMD and DAG1. Interacts with DTNB. Interacts with PGM5; the interaction is direct. Interacts with NOS1; localizes NOS1 to sarcolemma in muscle cells.

It localises to the cell membrane. It is found in the sarcolemma. Its subcellular location is the cytoplasm. The protein resides in the cytoskeleton. The protein localises to the postsynaptic cell membrane. Functionally, anchors the extracellular matrix to the cytoskeleton via F-actin. Ligand for dystroglycan. Component of the dystrophin-associated glycoprotein complex which accumulates at the neuromuscular junction (NMJ) and at a variety of synapses in the peripheral and central nervous systems and has a structural function in stabilizing the sarcolemma. Also implicated in signaling events and synaptic transmission. In Canis lupus familiaris (Dog), this protein is Dystrophin (DMD).